A 181-amino-acid polypeptide reads, in one-letter code: Adenine phosphoribosyltransferase (181 aa).

The protein belongs to the purine/pyrimidine phosphoribosyltransferase family. As to quaternary structure, homodimer.

The protein localises to the cytoplasm. It catalyses the reaction AMP + diphosphate = 5-phospho-alpha-D-ribose 1-diphosphate + adenine. The protein operates within purine metabolism; AMP biosynthesis via salvage pathway; AMP from adenine: step 1/1. Functionally, catalyzes a salvage reaction resulting in the formation of AMP, that is energically less costly than de novo synthesis. In Vibrio cholerae serotype O1 (strain ATCC 39541 / Classical Ogawa 395 / O395), this protein is Adenine phosphoribosyltransferase.